The following is a 338-amino-acid chain: Tryptophan--tRNA ligase (338 aa).

Residues 11 to 13 (QPS) and 19 to 20 (GN) each bind ATP. Residues 12-20 (PSGELSIGN) carry the 'HIGH' region motif. Asp135 contacts L-tryptophan. ATP is bound by residues 147–149 (GSD), Val189, and 198–202 (KMSKS). Residues 198–202 (KMSKS) carry the 'KMSKS' region motif.

This sequence belongs to the class-I aminoacyl-tRNA synthetase family. As to quaternary structure, homodimer.

The protein localises to the cytoplasm. The catalysed reaction is tRNA(Trp) + L-tryptophan + ATP = L-tryptophyl-tRNA(Trp) + AMP + diphosphate + H(+). Catalyzes the attachment of tryptophan to tRNA(Trp). The chain is Tryptophan--tRNA ligase from Vibrio cholerae serotype O1 (strain ATCC 39315 / El Tor Inaba N16961).